Here is a 237-residue protein sequence, read N- to C-terminus: tRNA (guanine-N(1)-)-methyltransferase (237 aa).

S-adenosyl-L-methionine-binding positions include Gly-112 and 132–137 (IGDFVL).

The protein belongs to the RNA methyltransferase TrmD family. In terms of assembly, homodimer.

Its subcellular location is the cytoplasm. It catalyses the reaction guanosine(37) in tRNA + S-adenosyl-L-methionine = N(1)-methylguanosine(37) in tRNA + S-adenosyl-L-homocysteine + H(+). Specifically methylates guanosine-37 in various tRNAs. In Thermosynechococcus vestitus (strain NIES-2133 / IAM M-273 / BP-1), this protein is tRNA (guanine-N(1)-)-methyltransferase.